Consider the following 508-residue polypeptide: Photosystem II CP47 reaction center protein (508 aa).

Transmembrane regions (helical) follow at residues 21-36, 101-115, 140-156, 203-218, 237-252, and 457-472; these read AVHI…WAGS, IVFS…IWHW, GIHL…FGAF, IAAG…FHLS, VLSS…AFVV, and SFAL…HGAR.

This sequence belongs to the PsbB/PsbC family. PsbB subfamily. PSII is composed of 1 copy each of membrane proteins PsbA, PsbB, PsbC, PsbD, PsbE, PsbF, PsbH, PsbI, PsbJ, PsbK, PsbL, PsbM, PsbT, PsbX, PsbY, PsbZ, Psb30/Ycf12, at least 3 peripheral proteins of the oxygen-evolving complex and a large number of cofactors. It forms dimeric complexes. It depends on Binds multiple chlorophylls. PSII binds additional chlorophylls, carotenoids and specific lipids. as a cofactor.

Its subcellular location is the plastid. The protein resides in the chloroplast thylakoid membrane. Functionally, one of the components of the core complex of photosystem II (PSII). It binds chlorophyll and helps catalyze the primary light-induced photochemical processes of PSII. PSII is a light-driven water:plastoquinone oxidoreductase, using light energy to abstract electrons from H(2)O, generating O(2) and a proton gradient subsequently used for ATP formation. This Buxus microphylla (Littleleaf boxwood) protein is Photosystem II CP47 reaction center protein.